We begin with the raw amino-acid sequence, 131 residues long: MPNSLIADAVARIRNGQMARLREVTIYHSRVLVEIAALLKEEGYIVGYEVIEIRPSVKRIIIRLKYYCGQPVISKLKLFSRPGKRIYSRACEIPKFYGGLGISVLSTSKGILPSYKAVSSNCGGELLFGVY.

Belongs to the universal ribosomal protein uS8 family. In terms of assembly, part of the 30S ribosomal subunit. Contacts proteins S5 and S12.

In terms of biological role, one of the primary rRNA binding proteins, it binds directly to 16S rRNA central domain where it helps coordinate assembly of the platform of the 30S subunit. This chain is Small ribosomal subunit protein uS8, found in Neorickettsia sennetsu (strain ATCC VR-367 / Miyayama) (Ehrlichia sennetsu).